Here is a 395-residue protein sequence, read N- to C-terminus: [LysW]-aminoadipate semialdehyde transaminase (395 aa).

Pyridoxal 5'-phosphate-binding positions include 113-114 (GT) and Phe-140. Arg-143 contributes to the substrate binding site. 225-228 (DEIQ) is a binding site for pyridoxal 5'-phosphate. Residue Lys-254 is modified to N6-(pyridoxal phosphate)lysine. Thr-282 serves as a coordination point for substrate. Thr-283 serves as a coordination point for pyridoxal 5'-phosphate.

The protein belongs to the class-III pyridoxal-phosphate-dependent aminotransferase family. LysJ subfamily. As to quaternary structure, homodimer. It depends on pyridoxal 5'-phosphate as a cofactor.

Its subcellular location is the cytoplasm. It carries out the reaction [amino-group carrier protein]-C-terminal-gamma-(L-lysyl)-L-glutamate + 2-oxoglutarate = [amino-group carrier protein]-C-terminal-N-(1-carboxy-5-oxopentan-1-yl)-L-glutamine + L-glutamate. It participates in amino-acid biosynthesis; L-lysine biosynthesis via AAA pathway; L-lysine from L-alpha-aminoadipate (Thermus route): step 4/5. Functionally, catalyzes the transfer of the amino group of L-glutamate to [LysW]-aminoadipate 6-semialdehyde, generating [LysW]-gamma-L-lysine. In Thermus thermophilus (strain ATCC 27634 / DSM 579 / HB8), this protein is [LysW]-aminoadipate semialdehyde transaminase.